Here is a 159-residue protein sequence, read N- to C-terminus: Phosphopantetheine adenylyltransferase (159 aa).

T10 is a substrate binding site. Residues 10–11 and H18 each bind ATP; that span reads TF. Residues K42, M74, and R88 each coordinate substrate. ATP is bound by residues 89–91, E99, and 124–130; these read GLR and WSFISSS.

The protein belongs to the bacterial CoaD family. Homohexamer. Requires Mg(2+) as cofactor.

Its subcellular location is the cytoplasm. The enzyme catalyses (R)-4'-phosphopantetheine + ATP + H(+) = 3'-dephospho-CoA + diphosphate. It participates in cofactor biosynthesis; coenzyme A biosynthesis; CoA from (R)-pantothenate: step 4/5. Its function is as follows. Reversibly transfers an adenylyl group from ATP to 4'-phosphopantetheine, yielding dephospho-CoA (dPCoA) and pyrophosphate. The chain is Phosphopantetheine adenylyltransferase from Salmonella dublin (strain CT_02021853).